Consider the following 210-residue polypeptide: Casparian strip membrane protein 4 (210 aa).

Residues 1 to 48 lie on the Cytoplasmic side of the membrane; the sequence is MAASKDRENFVYIAKLAEQAERYEEMVESMKNVANLDVELTVEERKKG. The chain crosses the membrane as a helical span at residues 49 to 69; sequence VAILDFILRLGAITSALGAAA. The Extracellular segment spans residues 70 to 98; that stretch reads TMATSDETLPFFTQFFQFEASYDSFSTFQ. A helical membrane pass occupies residues 99 to 119; the sequence is FFVIAMAFVGGYLVLSLPFSI. Over 120-131 the chain is Cytoplasmic; it reads VTIIRPHAAGPR. A helical transmembrane segment spans residues 132-152; that stretch reads LFLIILDTVFLTLATSSAAAA. Topologically, residues 153–184 are extracellular; that stretch reads TAIVYLAHNGNQDSNWLAICNQFGDFCQEISG. The helical transmembrane segment at 185-205 threads the bilayer; the sequence is AVVASFVAVVLFVLLIVMCAV. Residues 206 to 210 are Cytoplasmic-facing; the sequence is ALRNH.

The protein belongs to the Casparian strip membrane proteins (CASP) family. In terms of assembly, homodimer and heterodimers.

It is found in the cell membrane. Its function is as follows. Regulates membrane-cell wall junctions and localized cell wall deposition. Required for establishment of the Casparian strip membrane domain (CSD) and the subsequent formation of Casparian strips, a cell wall modification of the root endodermis that determines an apoplastic barrier between the intraorganismal apoplasm and the extraorganismal apoplasm and prevents lateral diffusion. The sequence is that of Casparian strip membrane protein 4 from Glycine max (Soybean).